Reading from the N-terminus, the 257-residue chain is N-acetylglucosaminyldiphosphoundecaprenol N-acetyl-beta-D-mannosaminyltransferase (257 aa).

It belongs to the glycosyltransferase 26 family. TagA/TarA subfamily.

The catalysed reaction is UDP-N-acetyl-alpha-D-mannosamine + N-acetyl-alpha-D-glucosaminyl-di-trans,octa-cis-undecaprenyl diphosphate = N-acetyl-beta-D-mannosaminyl-(1-&gt;4)-N-acetyl-alpha-D-glucosaminyl di-trans,octa-cis-undecaprenyl diphosphate + UDP + H(+). Its pathway is cell wall biogenesis; poly(ribitol phosphate) teichoic acid biosynthesis. In terms of biological role, catalyzes the conversion of GlcNAc-PP-undecaprenol into ManNAc-GlcNAc-PP-undecaprenol, the first committed lipid intermediate in the de novo synthesis of teichoic acid. The polypeptide is N-acetylglucosaminyldiphosphoundecaprenol N-acetyl-beta-D-mannosaminyltransferase (Bacillus spizizenii (strain ATCC 23059 / NRRL B-14472 / W23) (Bacillus subtilis subsp. spizizenii)).